A 529-amino-acid chain; its full sequence is Inosine-5'-monophosphate dehydrogenase (529 aa).

2 CBS domains span residues Met-129–Val-185 and Met-189–Thr-246. Residues Asp-283 and Gly-334–Gly-336 each bind NAD(+). K(+)-binding residues include Gly-336 and Gly-338. Ser-339 lines the IMP pocket. K(+) is bound at residue Cys-341. The Thioimidate intermediate role is filled by Cys-341. IMP contacts are provided by residues Asp-374 to Gly-376, Gly-397 to Ser-398, and Tyr-421 to Gly-425. The active-site Proton acceptor is the Arg-443. Residue Glu-458 coordinates IMP. Glu-511, Ser-512, and His-513 together coordinate K(+).

This sequence belongs to the IMPDH/GMPR family. Homotetramer. K(+) serves as cofactor.

It catalyses the reaction IMP + NAD(+) + H2O = XMP + NADH + H(+). It functions in the pathway purine metabolism; XMP biosynthesis via de novo pathway; XMP from IMP: step 1/1. Mycophenolic acid (MPA) is a non-competitive inhibitor that prevents formation of the closed enzyme conformation by binding to the same site as the amobile flap. In contrast, mizoribine monophosphate (MZP) is a competitive inhibitor that induces the closed conformation. MPA is a potent inhibitor of mammalian IMPDHs but a poor inhibitor of the bacterial enzymes. MZP is a more potent inhibitor of bacterial IMPDH. Functionally, catalyzes the conversion of inosine 5'-phosphate (IMP) to xanthosine 5'-phosphate (XMP), the first committed and rate-limiting step in the de novo synthesis of guanine nucleotides, and therefore plays an important role in the regulation of cell growth. This chain is Inosine-5'-monophosphate dehydrogenase, found in Mycobacterium leprae (strain TN).